The primary structure comprises 448 residues: Fumarate hydratase class II (448 aa).

Substrate contacts are provided by residues 83–85, 113–116, 123–125, and Thr-171; these read SGT, HPND, and SSN. Residue His-172 is the Proton donor/acceptor of the active site. Ser-302 is an active-site residue. Substrate is bound by residues Ser-303 and 308 to 310; that span reads KVN.

The protein belongs to the class-II fumarase/aspartase family. Fumarase subfamily. Homotetramer.

Its subcellular location is the cytoplasm. It carries out the reaction (S)-malate = fumarate + H2O. It functions in the pathway carbohydrate metabolism; tricarboxylic acid cycle; (S)-malate from fumarate: step 1/1. Involved in the TCA cycle. Catalyzes the stereospecific interconversion of fumarate to L-malate. The polypeptide is Fumarate hydratase class II (Blochmanniella floridana).